Here is a 162-residue protein sequence, read N- to C-terminus: Probable chemoreceptor glutamine deamidase CheD (162 aa).

The protein belongs to the CheD family.

It carries out the reaction L-glutaminyl-[protein] + H2O = L-glutamyl-[protein] + NH4(+). Probably deamidates glutamine residues to glutamate on methyl-accepting chemotaxis receptors (MCPs), playing an important role in chemotaxis. The chain is Probable chemoreceptor glutamine deamidase CheD from Pyrococcus horikoshii (strain ATCC 700860 / DSM 12428 / JCM 9974 / NBRC 100139 / OT-3).